Reading from the N-terminus, the 246-residue chain is Small ribosomal subunit protein uS3 (246 aa).

In terms of domain architecture, KH type-2 spans Ile38–Arg106. The segment at Val218–Arg246 is disordered.

The protein belongs to the universal ribosomal protein uS3 family. As to quaternary structure, part of the 30S ribosomal subunit. Forms a tight complex with proteins S10 and S14.

Binds the lower part of the 30S subunit head. Binds mRNA in the 70S ribosome, positioning it for translation. This chain is Small ribosomal subunit protein uS3, found in Porphyromonas gingivalis (strain ATCC 33277 / DSM 20709 / CIP 103683 / JCM 12257 / NCTC 11834 / 2561).